Here is a 582-residue protein sequence, read N- to C-terminus: MQETDLSIIKTFKRLFPIIRNYKWGLIAASVALILNALVDSSLIYLLKPLLDDGFGKADNAFLKQMAILVMLFILLRGVSNYIASYCLSWVSGKVVMTLRRNIFQHLMYMPVSYFDKNPTGRLLSRVTYDTEMVASSSSYVLVTIVREGAYLISLFAVMVYTSWQLSIVLFLLAPIIAFLISIVSKRFRILSRNIQNSMGELTVTTEQMLKGHKVVLSFGGQKVEKARFDRVSNDMRRKGMKIVSADGISDGLVQLIASLALSAVLYVATFPEVMSENLTAGSFTVVFSSMMAMLRPLKSLTSVNSQFQRGMAACQTLFEFLDLKTEKNNGTKQVERAQGCITFDNVIFSYEGKEEQALNQVSFTIPQGKTVALVGRSGSGKSTIASLLTRFYDVNEGQILLDGVNIEEYTLENLREQCSVVSQQVHLFNDTIANNIAYAAKDKYSRAQIIAAAQAAHAMEFIEKLEQGLDTVIGENGASLSGGQRQRLAIARALLRNAPVLVLDEATSALDTESELAIQSALAALQKNKTVLVIAHRLSTIEKADEILVVDQGKIVERGSHEQLLAKGGAYKQLYSMQFSE.

A run of 5 helical transmembrane segments spans residues 26–46, 68–88, 140–160, 164–184, and 252–272; these read LIAA…LIYL, ILVM…SYCL, YVLV…AVMV, WQLS…ISIV, and GLVQ…ATFP. The ABC transmembrane type-1 domain occupies 27–310; that stretch reads IAASVALILN…LTSVNSQFQR (284 aa). The ABC transporter domain maps to 342-578; the sequence is ITFDNVIFSY…GGAYKQLYSM (237 aa). 376–383 is a binding site for ATP; that stretch reads GRSGSGKS.

Belongs to the ABC transporter superfamily. Lipid exporter (TC 3.A.1.106) family. Homodimer.

Its subcellular location is the cell inner membrane. The catalysed reaction is ATP + H2O + lipid A-core oligosaccharideSide 1 = ADP + phosphate + lipid A-core oligosaccharideSide 2.. In terms of biological role, involved in lipopolysaccharide (LPS) biosynthesis. Translocates lipid A-core from the inner to the outer leaflet of the inner membrane. Transmembrane domains (TMD) form a pore in the inner membrane and the ATP-binding domain (NBD) is responsible for energy generation. The protein is ATP-dependent lipid A-core flippase of Haemophilus ducreyi (strain 35000HP / ATCC 700724).